We begin with the raw amino-acid sequence, 258 residues long: Cytosolic Fe-S cluster assembly factor Nubp2 homolog (258 aa).

Position 14-21 (14-21 (GKGGVGKS)) interacts with ATP. C188 and C191 together coordinate [4Fe-4S] cluster.

Belongs to the Mrp/NBP35 ATP-binding proteins family. NUBP2/CFD1 subfamily. Heterotetramer of 2 Nubp1 and 2 Nubp2 chains. Requires [4Fe-4S] cluster as cofactor.

The protein localises to the cytoplasm. Its function is as follows. Component of the cytosolic iron-sulfur (Fe/S) protein assembly (CIA) machinery. Required for maturation of extramitochondrial Fe-S proteins. The Nubp1-Nubp2 heterotetramer forms a Fe-S scaffold complex, mediating the de novo assembly of an Fe-S cluster and its transfer to target apoproteins. In Drosophila pseudoobscura pseudoobscura (Fruit fly), this protein is Cytosolic Fe-S cluster assembly factor Nubp2 homolog.